The primary structure comprises 552 residues: Hyaluronan synthase 2 (552 aa).

The Cytoplasmic segment spans residues methionine 1–arginine 11. Residues isoleucine 12–valine 32 traverse the membrane as a helical segment. The Extracellular segment spans residues glycine 33–serine 45. A helical transmembrane segment spans residues phenylalanine 46 to leucine 66. Topologically, residues glutamate 67–leucine 374 are cytoplasmic. Residues tryptophan 375–isoleucine 395 traverse the membrane as a helical segment. Residues glutamine 396–lysine 402 lie on the Extracellular side of the membrane. The helical transmembrane segment at isoleucine 403–phenylalanine 423 threads the bilayer. Residues alanine 424–glycine 429 are Cytoplasmic-facing. A helical transmembrane segment spans residues asparagine 430–alanine 450. At lysine 451–phenylalanine 475 the chain is on the extracellular side. Residues isoleucine 476 to isoleucine 496 form a helical membrane-spanning segment. The Cytoplasmic portion of the chain corresponds to tyrosine 497–threonine 510. Residues valine 511–leucine 531 traverse the membrane as a helical segment. Over valine 532–valine 552 the chain is Extracellular.

This sequence belongs to the NodC/HAS family. Homodimer; dimerization promotes enzymatic activity. It depends on Mg(2+) as a cofactor.

The protein resides in the cell membrane. The protein localises to the endoplasmic reticulum membrane. Its subcellular location is the vesicle. It localises to the golgi apparatus membrane. It is found in the lysosome. It carries out the reaction [hyaluronan](n) + UDP-N-acetyl-alpha-D-glucosamine = N-acetyl-beta-D-glucosaminyl-(1-&gt;4)-[hyaluronan](n) + UDP + H(+). The enzyme catalyses N-acetyl-beta-D-glucosaminyl-(1-&gt;4)-[hyaluronan](n) + UDP-alpha-D-glucuronate = [hyaluronan](n+1) + UDP + H(+). Its pathway is glycan biosynthesis; hyaluronan biosynthesis. Functionally, catalyzes the addition of GlcNAc or GlcUA monosaccharides to the nascent hyaluronan polymer. Therefore, it is essential to hyaluronan synthesis a major component of most extracellular matrices that has a structural role in tissues architectures and regulates cell adhesion, migration and differentiation. This is one of three isoenzymes responsible for cellular hyaluronan synthesis and it is particularly responsible for the synthesis of high molecular mass hyaluronan. The sequence is that of Hyaluronan synthase 2 (HAS2) from Gallus gallus (Chicken).